A 238-amino-acid chain; its full sequence is ATP synthase subunit a (238 aa).

Helical transmembrane passes span 35–55, 61–81, 94–114, 128–148, 151–171, 190–210, and 211–231; these read SNVIYAWFAMVLLIILGTLAT, VPSGLQNFFEVVVGGLESFVV, FLCALFLFIITGNLIGLVPGL, ALTVFAYYNFWGIRMWGAGYI, FMGPFWWLVPLMLPIEIISHL, IVLVLLFALAPVVGTFPMYFL, and FSLADCIQAFVFFMLAMIYLK.

The protein belongs to the ATPase A chain family. As to quaternary structure, F-type ATPases have 2 components, CF(1) - the catalytic core - and CF(0) - the membrane proton channel. CF(1) has five subunits: alpha(3), beta(3), gamma(1), delta(1), epsilon(1). CF(0) has three main subunits: a(1), b(2) and c(9-12). The alpha and beta chains form an alternating ring which encloses part of the gamma chain. CF(1) is attached to CF(0) by a central stalk formed by the gamma and epsilon chains, while a peripheral stalk is formed by the delta and b chains.

Its subcellular location is the cell inner membrane. Key component of the proton channel; it plays a direct role in the translocation of protons across the membrane. This chain is ATP synthase subunit a, found in Solidesulfovibrio magneticus (strain ATCC 700980 / DSM 13731 / RS-1) (Desulfovibrio magneticus).